The sequence spans 1110 residues: Nonribisomal peptide synthetase benY (1110 aa).

The interval 47-443 (RALEFPEKIA…GRKDHQLKVR (397 aa)) is adenylation. The Carrier domain maps to 575-651 (TLETESEKIL…EMAQSARVVP (77 aa)). O-(pantetheine 4'-phosphoryl)serine is present on Ser612. The interval 713–1025 (YILDGDVDFD…IFHHQNIDTK (313 aa)) is condensation.

This sequence belongs to the NRP synthetase family.

Its pathway is secondary metabolite biosynthesis. Nonribisomal peptide synthetase; part of the gene cluster that mediates the biosynthesis of benzomalvin A and D. The pathway begins with the loading of amino acid precursors onto the A domains of the non ribosomal peptide synthetases benY and benZ. BenY and the A1 domain of benZ are loaded with anthranilate (Anth), while the A2 domain of benZ is loaded with phenylalanine (Phe). N-methylation of Phe by the methyltransferase benX may happen before loading of Phe onto benZ, after loading of Phe, or after dipeptide formation. Condensation of Anth with the secondary amine of NmPhe or Phe is catalyzed by the C1 domain of benZ, forming a dipeptide intermediate. This is followed by in trans condensation of the Anth-NmPhe dipeptide with Anth bound to the T domain of benY by the C2 domain of benZ to form the linear tripeptide Anth-NmPhe-Anth. Cyclization and release of the tripeptide is then catalyzed by the C-terminal C domain of benY and the resulting 11-member macrocyclic intermediate is expected to spontaneously collapse to form the benzodiazepine core. Benzomalvin A is in conformational equilibrium with its atropisomer, benzomalvin D. The protein is Nonribisomal peptide synthetase benY of Aspergillus terreus.